We begin with the raw amino-acid sequence, 718 residues long: Polyribonucleotide nucleotidyltransferase (718 aa).

Mg(2+)-binding residues include Asp-497 and Asp-503. Residues 564 to 623 form the KH domain; the sequence is PRLLTMRIDPDMIGLVIGPGGKTVKSITEQTKTKIDIDDDGTVTISASEAEQAERAKQLI. In terms of domain architecture, S1 motif spans 633-701; that stretch reads GEVYVGRVTR…NKGRLNLTRL (69 aa).

This sequence belongs to the polyribonucleotide nucleotidyltransferase family. Mg(2+) is required as a cofactor.

The protein resides in the cytoplasm. It carries out the reaction RNA(n+1) + phosphate = RNA(n) + a ribonucleoside 5'-diphosphate. Its function is as follows. Involved in mRNA degradation. Catalyzes the phosphorolysis of single-stranded polyribonucleotides processively in the 3'- to 5'-direction. The chain is Polyribonucleotide nucleotidyltransferase from Gloeothece citriformis (strain PCC 7424) (Cyanothece sp. (strain PCC 7424)).